We begin with the raw amino-acid sequence, 400 residues long: CinA-like protein (400 aa).

Belongs to the CinA family.

The sequence is that of CinA-like protein from Escherichia coli (strain SE11).